Reading from the N-terminus, the 123-residue chain is Angiogenin-2 (123 aa).

Q1 is modified (pyrrolidone carboxylic acid). Catalysis depends on H12, which acts as the Proton acceptor. 3 disulfide bridges follow: C25–C80, C38–C91, and C56–C106. The short motif at 30 to 34 (ERRNM) is the Nucleolar localization signal element. N-linked (GlcNAc...) asparagine glycosylation occurs at N33. Residues D40, H82, and H113 each coordinate Zn(2+). Catalysis depends on H113, which acts as the Proton donor.

Belongs to the pancreatic ribonuclease family. In terms of tissue distribution, serum and milk.

It localises to the cytoplasmic vesicle. The protein resides in the secretory vesicle lumen. The protein localises to the secreted. It is found in the nucleus. Its subcellular location is the nucleolus. Divalent metal ions, such as Cu2+ and Zn2+, may inhibit the ribonucleolytic activity. Its function is as follows. Binds tightly to placental ribonuclease inhibitor and has very low ribonuclease activity. Has potent angiogenic activity. Angiogenin induces vascularization of normal and malignant tissues. Abolishes protein synthesis by specifically hydrolyzing cellular tRNAs. The polypeptide is Angiogenin-2 (Bos taurus (Bovine)).